Here is a 751-residue protein sequence, read N- to C-terminus: MTISPPEREAKAKVSVDNNPVPTSFEKWGKPGHFDRTLARGPKTTTWIWNLHANAHDFDSQTSDLEDVSRKIFSAHFGHLAVVFVWLSGMYFHGAKFSNYEGWLADPTHIKPSAQVVWPIVGQGILNGDVGGGFHGIQITSGLFYLWRASGFTDSYQLYCTAIGGLVMAALMLFAGWFHYHVKAPKLEWFQNVESMMNHHLAGLLGLGSLGWAGHQIHVSMPINKLLDAGVAPKDIPLPHEFILEPSKMAELYPSFAQGLTPFFTLNWGVYSDFLTFKGGLNPVTGGLWLSDTAHHHLAIAVLFIIAGHMYRTNWGIGHSMKEILEAHKGPFTGEGHKGLYEILTTSWHAQLAINLALLGSLTIIVAQHMYAMPPYPYQAIDYATQLSLFTHHMWIGGFLIVGAGAHGAIFMVRDYDPAKNVNNLLDRMLRHRDAIISHLNWVCIFLGFHSFGLYIHNDTMRALGRPQDMFSDTAIQLQPIFAQWVQHLHTLAPGATAPNALATASYAFGGETIAVAGKVAMMPITLGTADFMVHHIHAFTIHVTALILLKGVLYARSSRLVPDKANLGFRFPCDGPGRGGTCQVSGWDHVFLGLFWMYNSLSIVIFHFSWKMQSDVWGTVSPDGSVTHVTLGNFAQSAITINGWLRDFLWAQAANVINSYGSALSAYGIMFLAGHFVFAFSLMFLFSGRGYWQELIESIVWAHNKLNVAPAIQPRALSIIQGRAVGVAHYLLGGIVTTWAFFLARSLSIG.

Helical transmembrane passes span 72–95, 158–181, 197–221, 293–311, 348–371, 387–413, 435–457, and 532–550; these read IFSA…FHGA, LYCT…FHYH, MNHH…HVSM, TAHH…GHMY, WHAQ…QHMY, LSLF…IFMV, AIIS…LYIH, and FMVH…LILL. [4Fe-4S] cluster contacts are provided by cysteine 574 and cysteine 583. The next 2 helical transmembrane spans lie at 590–611 and 665–687; these read HVFL…HFSW and LSAY…MFLF. A chlorophyll a'-binding site is contributed by histidine 676. Chlorophyll a is bound by residues methionine 684 and tyrosine 692. Residue tryptophan 693 participates in phylloquinone binding. A helical membrane pass occupies residues 725 to 745; it reads AVGVAHYLLGGIVTTWAFFLA.

This sequence belongs to the PsaA/PsaB family. The PsaA/B heterodimer binds the P700 chlorophyll special pair and subsequent electron acceptors. PSI consists of a core antenna complex that captures photons, and an electron transfer chain that converts photonic excitation into a charge separation. The cyanobacterial PSI reaction center is composed of one copy each of PsaA,B,C,D,E,F,I,J,K,L,M and X, and forms trimeric complexes. The cofactor is PSI electron transfer chain: 5 chlorophyll a, 1 chlorophyll a', 2 phylloquinones and 3 4Fe-4S clusters. PSI core antenna: 90 chlorophyll a, 22 carotenoids, 3 phospholipids and 1 galactolipid. P700 is a chlorophyll a/chlorophyll a' dimer, A0 is one or more chlorophyll a, A1 is one or both phylloquinones and FX is a shared 4Fe-4S iron-sulfur center..

It is found in the cellular thylakoid membrane. It carries out the reaction reduced [plastocyanin] + hnu + oxidized [2Fe-2S]-[ferredoxin] = oxidized [plastocyanin] + reduced [2Fe-2S]-[ferredoxin]. In terms of biological role, psaA and PsaB bind P700, the primary electron donor of photosystem I (PSI), as well as the electron acceptors A0, A1 and FX. PSI is a plastocyanin/cytochrome c6-ferredoxin oxidoreductase, converting photonic excitation into a charge separation, which transfers an electron from the donor P700 chlorophyll pair to the spectroscopically characterized acceptors A0, A1, FX, FA and FB in turn. Oxidized P700 is reduced on the lumenal side of the thylakoid membrane by plastocyanin or cytochrome c6. In Synechocystis sp. (strain ATCC 27184 / PCC 6803 / Kazusa), this protein is Photosystem I P700 chlorophyll a apoprotein A1.